The primary structure comprises 312 residues: Ribosomal protein L11 methyltransferase (312 aa).

S-adenosyl-L-methionine-binding residues include Thr-160, Gly-181, Asp-203, and Asn-246.

This sequence belongs to the methyltransferase superfamily. PrmA family.

Its subcellular location is the cytoplasm. The enzyme catalyses L-lysyl-[protein] + 3 S-adenosyl-L-methionine = N(6),N(6),N(6)-trimethyl-L-lysyl-[protein] + 3 S-adenosyl-L-homocysteine + 3 H(+). In terms of biological role, methylates ribosomal protein L11. This chain is Ribosomal protein L11 methyltransferase, found in Staphylococcus saprophyticus subsp. saprophyticus (strain ATCC 15305 / DSM 20229 / NCIMB 8711 / NCTC 7292 / S-41).